A 392-amino-acid chain; its full sequence is Homeobox protein engrailed-1 (392 aa).

Disordered regions lie at residues 1–100, 132–164, 219–251, and 282–306; these read MEEQ…AQLH, ARGGAGGGGRVERDRGQTAAGRDPVHPLGTRAP, KPSDTGGGGSGGGAGSPGAQGTKYPEHGNPAIL, and SDRPSSGPRTRKLKKKKNEKEDKRP. Low complexity predominate over residues 14–36; the sequence is SALGAAAAATPGGLSLSLSPGAS. Composition is skewed to pro residues over residues 51–66 and 75–84; these read SPQPAPPSPPAAPCLP and PPHPPPPPPQ. Positions 85-100 are enriched in low complexity; the sequence is HLAAPAHQPQPAAQLH. The span at 223 to 236 shows a compositional bias: gly residues; the sequence is TGGGGSGGGAGSPG. The homeobox DNA-binding region spans 303-362; that stretch reads DKRPRTAFTAEQLQRLKAEFQANRYITEQRRQTLAQELSLNESQIKIWFQNKRAKIKKAT.

Belongs to the engrailed homeobox family.

It is found in the nucleus. Functionally, required for proper formation of the apical ectodermal ridge and correct dorsal-ventral patterning in the limb. This Homo sapiens (Human) protein is Homeobox protein engrailed-1 (EN1).